Reading from the N-terminus, the 713-residue chain is Glutamine-dependent NAD(+) synthetase (713 aa).

The 272-residue stretch at 4-275 folds into the CN hydrolase domain; it reads VTLATCNLNQ…IEVITATVDL (272 aa). Glu44 (proton acceptor; for glutaminase activity) is an active-site residue. Catalysis depends on Lys114, which acts as the For glutaminase activity. Cys175 (nucleophile; for glutaminase activity) is an active-site residue. The segment at 324-703 is ligase; the sequence is YNTPAEEIGF…QRPQLKNTVN (380 aa). 354–361 is an ATP binding site; that stretch reads PLSGGADS. Ser356 is an active-site residue.

This sequence in the C-terminal section; belongs to the NAD synthetase family.

It carries out the reaction deamido-NAD(+) + L-glutamine + ATP + H2O = L-glutamate + AMP + diphosphate + NAD(+) + H(+). It participates in cofactor biosynthesis; NAD(+) biosynthesis; NAD(+) from deamido-NAD(+) (L-Gln route): step 1/1. This Dictyostelium discoideum (Social amoeba) protein is Glutamine-dependent NAD(+) synthetase (nadsyn1).